A 185-amino-acid chain; its full sequence is Pyruvate/ketoisovalerate oxidoreductases common subunit gamma (185 aa).

In terms of assembly, heterotetramer of one alpha, one beta, one delta and one gamma chain.

It carries out the reaction 2 oxidized [2Fe-2S]-[ferredoxin] + pyruvate + CoA = 2 reduced [2Fe-2S]-[ferredoxin] + acetyl-CoA + CO2 + H(+). It catalyses the reaction 3-methyl-2-oxobutanoate + 2 oxidized [2Fe-2S]-[ferredoxin] + CoA = 2-methylpropanoyl-CoA + 2 reduced [2Fe-2S]-[ferredoxin] + CO2 + H(+). This chain is Pyruvate/ketoisovalerate oxidoreductases common subunit gamma (porG), found in Thermococcus litoralis (strain ATCC 51850 / DSM 5473 / JCM 8560 / NS-C).